The chain runs to 274 residues: Ethanolamine ammonia-lyase small subunit (274 aa).

Adenosylcob(III)alamin is bound by residues Val161, Glu182, and Cys211.

It belongs to the EutC family. In terms of assembly, the basic unit is a heterodimer which dimerizes to form tetramers. The heterotetramers trimerize; 6 large subunits form a core ring with 6 small subunits projecting outwards. Adenosylcob(III)alamin serves as cofactor.

The protein localises to the bacterial microcompartment. The enzyme catalyses ethanolamine = acetaldehyde + NH4(+). It functions in the pathway amine and polyamine degradation; ethanolamine degradation. Functionally, catalyzes the deamination of various vicinal amino-alcohols to oxo compounds. Allows this organism to utilize ethanolamine as the sole source of nitrogen and carbon in the presence of external vitamin B12. This Pseudomonas fluorescens (strain ATCC BAA-477 / NRRL B-23932 / Pf-5) protein is Ethanolamine ammonia-lyase small subunit.